Here is a 546-residue protein sequence, read N- to C-terminus: Membrane protein insertase YidC (546 aa).

The chain crosses the membrane as a helical span at residues 8–28; that stretch reads ILLATVLSVGILILWQVIFPT. The segment at 31–70 is disordered; it reads APPKPAHPPAAEVAKPAAPASPAPGAAAPAVPAPPPDAPE. Positions 39–60 are enriched in low complexity; sequence PAAEVAKPAAPASPAPGAAAPA. 5 helical membrane-spanning segments follow: residues 326–346, 356–376, 422–442, 459–479, and 498–518; these read IDYG…LYVM, WGVA…PLTY, LGGC…YAAL, LTAH…SFVM, and FFPG…TLYI.

Belongs to the OXA1/ALB3/YidC family. Type 1 subfamily. As to quaternary structure, interacts with the Sec translocase complex via SecD. Specifically interacts with transmembrane segments of nascent integral membrane proteins during membrane integration.

Its subcellular location is the cell inner membrane. Its function is as follows. Required for the insertion and/or proper folding and/or complex formation of integral membrane proteins into the membrane. Involved in integration of membrane proteins that insert both dependently and independently of the Sec translocase complex, as well as at least some lipoproteins. Aids folding of multispanning membrane proteins. This is Membrane protein insertase YidC from Anaeromyxobacter dehalogenans (strain 2CP-1 / ATCC BAA-258).